The sequence spans 1405 residues: DNA-directed RNA polymerase subunit beta' (1405 aa).

4 residues coordinate Zn(2+): Cys70, Cys72, Cys85, and Cys88. 3 residues coordinate Mg(2+): Asp460, Asp462, and Asp464. The Zn(2+) site is built by Cys814, Cys888, Cys895, and Cys898.

Belongs to the RNA polymerase beta' chain family. In terms of assembly, the RNAP catalytic core consists of 2 alpha, 1 beta, 1 beta' and 1 omega subunit. When a sigma factor is associated with the core the holoenzyme is formed, which can initiate transcription. Mg(2+) is required as a cofactor. Requires Zn(2+) as cofactor.

The enzyme catalyses RNA(n) + a ribonucleoside 5'-triphosphate = RNA(n+1) + diphosphate. DNA-dependent RNA polymerase catalyzes the transcription of DNA into RNA using the four ribonucleoside triphosphates as substrates. The protein is DNA-directed RNA polymerase subunit beta' of Wigglesworthia glossinidia brevipalpis.